The sequence spans 173 residues: Endoribonuclease YbeY (173 aa).

His126, His130, and His136 together coordinate Zn(2+).

The protein belongs to the endoribonuclease YbeY family. Zn(2+) serves as cofactor.

Its subcellular location is the cytoplasm. Functionally, single strand-specific metallo-endoribonuclease involved in late-stage 70S ribosome quality control and in maturation of the 3' terminus of the 16S rRNA. In Sinorhizobium fredii (strain NBRC 101917 / NGR234), this protein is Endoribonuclease YbeY.